The primary structure comprises 295 residues: Origin of replication complex subunit 6 (295 aa).

The disordered stretch occupies residues proline 212–asparagine 295. Residues aspartate 220 to aspartate 236 show a composition bias toward acidic residues. The segment covering tryptophan 254 to glutamine 263 has biased composition (polar residues).

This sequence belongs to the ORC6 family. As to quaternary structure, component of the origin recognition complex (ORC) composed of at least ORC1, ORC2, ORC3, ORC4, ORC5 and ORC6. ORC is regulated in a cell-cycle and development dependent manner. It is sequentially assembled at the exit from anaphase of mitosis and disassembled as cells enter S phase.

The protein resides in the nucleus. Component of the origin recognition complex (ORC) that binds origins of replication. DNA-binding is ATP-dependent. The specific DNA sequences that define origins of replication have not been identified yet. ORC is required to assemble the pre-replication complex necessary to initiate DNA replication. The sequence is that of Origin of replication complex subunit 6 from Oryza sativa subsp. japonica (Rice).